A 235-amino-acid polypeptide reads, in one-letter code: BPI fold-containing family A member 2 (235 aa).

Residues 1-20 (MFQLGSLVVLCGLLIGNSES) form the signal peptide. C161 and C204 are joined by a disulfide.

This sequence belongs to the BPI/LBP/Plunc superfamily. Plunc family. Predominates in the parotid glands, present in smaller amounts (1/10) in the submaxillary glands and in the sublingual glands, and at lower amount in the pancreas but undetectable in the liver. Found also in lacrimal gland.

The protein resides in the secreted. Functionally, has strong antibacterial activity against P.aeruginosa. The protein is BPI fold-containing family A member 2 (Bpifa2) of Mus musculus (Mouse).